Reading from the N-terminus, the 546-residue chain is DNA replication factor Cdt1 (546 aa).

The segment covering 1–11 has biased composition (basic and acidic residues); sequence MEQRRVTDFFA. The PIP-box K+4 motif motif lies at 1 to 23; that stretch reads MEQRRVTDFFARRRPGPPRIAPP. Disordered stretches follow at residues 1–118 and 143–165; these read MEQR…QDQD and SAQDAGESCTPEAEGRPEEPCGE. Positions 28–45 are enriched in low complexity; it reads RTPSPARPALRAPASATS. At Thr-29 the chain carries Phosphothreonine; by MAPK8. Ser-31 carries the post-translational modification Phosphoserine. Residues 68–70 carry the Cyclin-binding motif motif; it reads RRL. Ser-93 carries the post-translational modification Phosphoserine; by MAPK8. The segment at 150-190 is interaction with GMNN; sequence SCTPEAEGRPEEPCGEKAPAYQRFHALAQPGLPGLVLPYKY. Residues 155–164 are compositionally biased toward basic and acidic residues; the sequence is AEGRPEEPCG. Phosphoserine; by MAPK8 is present on Ser-318. 2 positions are modified to phosphoserine: Ser-380 and Ser-394. A disordered region spans residues 383 to 415; sequence ALRSAAPSSPGSPRPALPATPPATPPAASPSAL. Residues 392–410 are compositionally biased toward pro residues; the sequence is PGSPRPALPATPPATPPAA. The segment at 451 to 546 is interaction with LRWD1; that stretch reads LERLPELARV…AHQTRAEEGL (96 aa).

This sequence belongs to the Cdt1 family. As to quaternary structure, interacts with GMNN; the interaction inhibits binding of the MCM complex to origins of replication. Interacts with MCM6. Interacts with CDC6; are mutually dependent on one another for loading MCM complexes onto chromatin. Interacts with PCNA. Interacts with LRWD1 during G1 phase and during mitosis. Interacts with NDC80 subunit of the NDC80 complex; leading to kinetochore localization. Interacts with GRWD1; origin binding of GRWD1 is dependent on CDT1. Interacts with KAT7. Interacts with ubiquitin-binding protein FAF1; the interaction is likely to promote CDT1 degradation. Two independent E3 ubiquitin ligase complexes, SCF(SKP2) and the DCX(DTL) complex, mediated CDT1 degradation in S phase. Ubiquitinated by the DCX(DTL) complex, in response to DNA damage, leading to its degradation. Ubiquitination by the DCX(DTL) complex is necessary to ensure proper cell cycle regulation and is PCNA-dependent: interacts with PCNA via its PIP-box, while the presence of the containing the 'K+4' motif in the PIP box, recruit the DCX(DTL) complex, leading to its degradation. Phosphorylation at Thr-29 by CDK2 targets CDT1 for ubiquitination by SCF(SKP2) E3 ubiquitin ligase and subsequent degradation. The interaction with GMNN protects it against ubiquitination. Deubiquitinated by USP37. Ubiquitinated and degraded by the SCF(FBXO31) complex during the G2 phase to prevent re-replication. In terms of processing, phosphorylation by cyclin A-dependent kinases at Thr-29 targets CDT1 for ubiquitynation by SCF(SKP2) E3 ubiquitin ligase and subsequent degradation. Phosphorylated at Thr-29 by MAPK8/JNK1, which blocks replication licensing in response to stress. Binding to GMNN is not affected by phosphorylation.

Its subcellular location is the nucleus. The protein localises to the chromosome. The protein resides in the centromere. It localises to the kinetochore. Functionally, required for both DNA replication and mitosis. DNA replication licensing factor, required for pre-replication complex assembly. Cooperates with CDC6 and the origin recognition complex (ORC) during G1 phase of the cell cycle to promote the loading of the mini-chromosome maintenance (MCM) complex onto DNA to generate pre-replication complexes (pre-RC). Required also for mitosis by promoting stable kinetochore-microtubule attachments. Potential oncogene. This is DNA replication factor Cdt1 from Homo sapiens (Human).